A 632-amino-acid chain; its full sequence is tRNA uridine 5-carboxymethylaminomethyl modification enzyme MnmG (632 aa).

Residues 13–18 (GGGHAG), valine 125, and serine 180 each bind FAD. 273–287 (GPRYCPSIEDKVMRF) lines the NAD(+) pocket. Glutamine 370 serves as a coordination point for FAD.

It belongs to the MnmG family. As to quaternary structure, homodimer. Heterotetramer of two MnmE and two MnmG subunits. Requires FAD as cofactor.

It is found in the cytoplasm. In terms of biological role, NAD-binding protein involved in the addition of a carboxymethylaminomethyl (cmnm) group at the wobble position (U34) of certain tRNAs, forming tRNA-cmnm(5)s(2)U34. In Vibrio vulnificus (strain CMCP6), this protein is tRNA uridine 5-carboxymethylaminomethyl modification enzyme MnmG.